A 671-amino-acid polypeptide reads, in one-letter code: MVVKRTQTDSRMQSTPGNHNHPDAHANAAYMTPPSMGALNANNSNSQLSTLTISPMTYLANNTSTDGSFLKERNAQNTDSLSREDYLRLWRHDALMQQQYKCAAFVGEKVLDITGNPNDAFWLAQVYCCTGDYARAKCLLTKEDLYNRSSACRYLAAFCLVKLYDWQGALNLLGETNPFRKDEKNANKLLMQDGGIKLEASMCYLRGQVYTNLSNFDRAKECYKEALMVDAKCYEAFDQLVSNHLLTADEEWDLVLKLNYSTYSKEDAAFLRSLYMLKLNKTSHEDELRRAEDYLSSINGLEKSSDLLLCKADTLFVRSRFIDVLAITTKILEIDPYNLDVYPLHLASLHESGEKNKLYLISNDLVDRHPEKAVTWLAVGIYYLCVNKISEARRYFSKSSTMDPQFGPAWIGFAHSFAIEGEHDQAISAYTTAARLFQGTHLPYLFLGMQHMQLGNILLANEYLQSSYALFQYDPLLLNELGVVAFNKSDMQTAINHFQNALLLVKKTQSNEKPWAATWANLGHAYRKLKMYDAAIDALNQGLLLSTNDANVHTAIALVYLHKKIPGLAITHLHESLAISPNEIMASDLLKRALEENSLTSGFLNSKYVFEDEVSEYMQQSNLNTSDKSMSMEDQSGKVTESVNDRTQVLYADSRSEMMMDDIEGNVSEQR.

The interval Met1–Ala24 is disordered. TPR repeat units lie at residues Arg83 to Thr114, Pro117 to Lys142, Ser150 to Leu173, Leu198 to Val229, Tyr234 to Lys257, Ala268 to Ser296, Asp306 to Ile334, Val341 to Arg368, Ala373 to Met402, Gly407 to Arg435, Leu442 to Leu470, Pro475 to Lys507, Lys513 to Leu545, and Ala550 to Ile579. The interval Asn622–Val643 is disordered.

As to quaternary structure, the APC/C is composed of at least 13 subunits: apc1, apc2, nuc2, apc4, apc5, cut9, apc8, apc10, apc11, hcn1, apc13, apc14 and apc15. Homodimer. Interacts directly with nuc2 and hcn1. Phosphorylated.

It localises to the nucleus. In terms of biological role, component of the anaphase-promoting complex/cyclosome (APC/C), a cell cycle-regulated E3 ubiquitin-protein ligase complex that controls progression through mitosis and the G1 phase of the cell cycle. The APC/C is thought to confer substrate specificity and, in the presence of ubiquitin-conjugating E2 enzymes, it catalyzes the formation of protein-ubiquitin conjugates that are subsequently degraded by the 26S proteasome. May play a pivotal role in the control of anaphase. The protein is Anaphase-promoting complex subunit cut9 (cut9) of Schizosaccharomyces pombe (strain 972 / ATCC 24843) (Fission yeast).